The chain runs to 1000 residues: C2 domain-containing protein 5 (1000 aa).

In terms of domain architecture, C2 spans methionine 1–phenylalanine 109. Residues aspartate 19, aspartate 26, aspartate 76, aspartate 78, serine 81, and aspartate 84 each contribute to the Ca(2+) site. Phosphoserine; by PKB/AKT2 is present on serine 197. Residues serine 200 and serine 260 each carry the phosphoserine modification. The disordered stretch occupies residues methionine 265–proline 330. The span at proline 274–asparagine 289 shows a compositional bias: polar residues. A compositionally biased stretch (low complexity) spans glutamine 290–glycine 318. 5 positions are modified to phosphoserine: serine 293, serine 295, serine 304, serine 305, and serine 306. Position 317 is a phosphothreonine (threonine 317). Gly residues predominate over residues methionine 319–glycine 328. Serine 323 carries the phosphoserine modification. Threonine 601 is modified (phosphothreonine). The disordered stretch occupies residues glutamate 639 to aspartate 669. Residues serine 643, serine 657, serine 659, serine 661, and serine 662 each carry the phosphoserine modification. At threonine 666 the chain carries Phosphothreonine. At serine 671 the chain carries Phosphoserine. Threonine 807 carries the post-translational modification Phosphothreonine. A phosphoserine mark is found at serine 817 and serine 852.

Requires Ca(2+) as cofactor. In terms of processing, phosphorylated on Ser-197 by active myristoylated kinase AKT2; insulin-stimulated phosphorylation by AKT2 regulates SLC2A4/GLUT4 translocation into the plasma membrane.

It localises to the cytoplasmic vesicle membrane. Its subcellular location is the cytoplasm. The protein localises to the cell cortex. It is found in the cell membrane. The protein resides in the cell projection. It localises to the ruffle. In terms of biological role, required for insulin-stimulated glucose transport and glucose transporter SLC2A4/GLUT4 translocation from intracellular glucose storage vesicle (GSV) to the plasma membrane (PM) in adipocytes. Binds phospholipid membranes in a calcium-dependent manner and is necessary for the optimal membrane fusion between SLC2A4/GLUT4 GSV and the PM. This chain is C2 domain-containing protein 5 (C2CD5), found in Homo sapiens (Human).